The chain runs to 370 residues: uncharacterized protein (370 aa).

D152, H154, D184, N215, H306, and H308 together coordinate a divalent metal cation.

It belongs to the metallophosphoesterase superfamily. It depends on a divalent metal cation as a cofactor.

This is an uncharacterized protein from Helicobacter pylori (strain J99 / ATCC 700824) (Campylobacter pylori J99).